The chain runs to 192 residues: Peptidyl-tRNA hydrolase (192 aa).

Tyr-16 is a binding site for tRNA. His-21 acts as the Proton acceptor in catalysis. Positions 66 and 68 each coordinate tRNA.

The protein belongs to the PTH family. Monomer.

The protein localises to the cytoplasm. It carries out the reaction an N-acyl-L-alpha-aminoacyl-tRNA + H2O = an N-acyl-L-amino acid + a tRNA + H(+). Hydrolyzes ribosome-free peptidyl-tRNAs (with 1 or more amino acids incorporated), which drop off the ribosome during protein synthesis, or as a result of ribosome stalling. In terms of biological role, catalyzes the release of premature peptidyl moieties from peptidyl-tRNA molecules trapped in stalled 50S ribosomal subunits, and thus maintains levels of free tRNAs and 50S ribosomes. This Aquifex aeolicus (strain VF5) protein is Peptidyl-tRNA hydrolase.